A 463-amino-acid chain; its full sequence is L-seryl-tRNA(Sec) selenium transferase (463 aa).

Lys-295 bears the N6-(pyridoxal phosphate)lysine mark.

Belongs to the SelA family. As to quaternary structure, homodecamer; pentamer of dimers. Binds only one seryl-tRNA(Sec) per dimer. It depends on pyridoxal 5'-phosphate as a cofactor.

It is found in the cytoplasm. It catalyses the reaction L-seryl-tRNA(Sec) + selenophosphate + H(+) = L-selenocysteinyl-tRNA(Sec) + phosphate. Its pathway is aminoacyl-tRNA biosynthesis; selenocysteinyl-tRNA(Sec) biosynthesis; selenocysteinyl-tRNA(Sec) from L-seryl-tRNA(Sec) (bacterial route): step 1/1. Its function is as follows. Converts seryl-tRNA(Sec) to selenocysteinyl-tRNA(Sec) required for selenoprotein biosynthesis. The protein is L-seryl-tRNA(Sec) selenium transferase of Salmonella typhimurium (strain LT2 / SGSC1412 / ATCC 700720).